We begin with the raw amino-acid sequence, 2961 residues long: Zinc finger ZZ-type and EF-hand domain-containing protein 1 (2961 aa).

The interval 1–41 is disordered; the sequence is MGNAPSHSSEDEAAAAGGEGWGPHQDWAAVSGTTPGPGVAA. A lipid anchor (N-myristoyl glycine) is attached at G2. The 36-residue stretch at 111–146 folds into the EF-hand domain; it reads CSSEQFEEAFAQFDAEGDGTVDAENMLEALKNSSGA. The region spanning 226–405 is the DOC domain; sequence LVQKEKESPG…AIWYWSLLTS (180 aa). 4 positions are modified to phosphoserine: S240, S1475, S1488, and S1509. The disordered stretch occupies residues 1446–1531; that stretch reads TADETSHLQP…PTRRPPFTRG (86 aa). Residues 1485–1502 show a composition bias toward polar residues; sequence GDQSPGLGTQPKLPSSSG. A Phosphothreonine modification is found at T1512. A compositionally biased stretch (low complexity) spans 1516–1531; that stretch reads PLSPSTPTRRPPFTRG. Phosphoserine is present on S1518. 2 positions are modified to phosphothreonine: T1521 and T1523. S1537 and S1540 each carry phosphoserine. ZZ-type zinc fingers lie at residues 1778–1833 and 1827–1882; these read NVDI…FTCD and NMEF…MVTI. 16 residues coordinate Zn(2+): C1783, C1786, C1797, C1800, C1806, C1809, H1819, H1823, C1832, C1835, C1846, C1849, C1855, C1858, H1868, and H1872. Disordered regions lie at residues 1994-2078 and 2426-2455; these read AVQG…PSPE and LELD…KLDP. Positions 2009–2027 are enriched in basic and acidic residues; the sequence is AVHEEIRPVDFKQRNKADK. The span at 2033 to 2043 shows a compositional bias: polar residues; sequence KDPSCQTQISD. The span at 2426–2440 shows a compositional bias: basic and acidic residues; it reads LELDERGDREEEVER. S2444 bears the Phosphoserine mark. Residue K2667 is modified to N6-acetyllysine.

As to quaternary structure, interacts with KLF6 and KLF9. Interacts via (ZZ-type 2 zinc finger) with histone H3 trimethylated at 'Lys-4' (H3K4me3) and histone H3 acetylated at 'Lys-4' (H3K4ac). Expressed at low levels in cerebellum.

Histone H3 reader which may act as a transcriptional coactivator for KLF6 and KLF9 transcription factors. In Homo sapiens (Human), this protein is Zinc finger ZZ-type and EF-hand domain-containing protein 1.